The following is a 347-amino-acid chain: GMP reductase (347 aa).

108–131 (ADFDKMKQILALSPALKFICIDVA) contacts NADP(+). The K(+) site is built by Gly181 and Gly183. The Thioimidate intermediate role is filled by Cys186. 216–239 (IVSDGGCSVPGDVAKAFGGGADFV) serves as a coordination point for NADP(+).

This sequence belongs to the IMPDH/GMPR family. GuaC type 1 subfamily. Homotetramer.

The catalysed reaction is IMP + NH4(+) + NADP(+) = GMP + NADPH + 2 H(+). Functionally, catalyzes the irreversible NADPH-dependent deamination of GMP to IMP. It functions in the conversion of nucleobase, nucleoside and nucleotide derivatives of G to A nucleotides, and in maintaining the intracellular balance of A and G nucleotides. The protein is GMP reductase of Yersinia enterocolitica serotype O:8 / biotype 1B (strain NCTC 13174 / 8081).